Consider the following 181-residue polypeptide: ATP synthase subunit b, chloroplastic (181 aa).

A helical transmembrane segment spans residues 27–49 (LATNPINLSVVLGVVIYFGKGVL).

This sequence belongs to the ATPase B chain family. As to quaternary structure, F-type ATPases have 2 components, F(1) - the catalytic core - and F(0) - the membrane proton channel. F(1) has five subunits: alpha(3), beta(3), gamma(1), delta(1), epsilon(1). F(0) has four main subunits: a(1), b(1), b'(1) and c(10-14). The alpha and beta chains form an alternating ring which encloses part of the gamma chain. F(1) is attached to F(0) by a central stalk formed by the gamma and epsilon chains, while a peripheral stalk is formed by the delta, b and b' chains.

The protein localises to the plastid. It localises to the chloroplast thylakoid membrane. F(1)F(0) ATP synthase produces ATP from ADP in the presence of a proton or sodium gradient. F-type ATPases consist of two structural domains, F(1) containing the extramembraneous catalytic core and F(0) containing the membrane proton channel, linked together by a central stalk and a peripheral stalk. During catalysis, ATP synthesis in the catalytic domain of F(1) is coupled via a rotary mechanism of the central stalk subunits to proton translocation. Its function is as follows. Component of the F(0) channel, it forms part of the peripheral stalk, linking F(1) to F(0). This Lemna minor (Common duckweed) protein is ATP synthase subunit b, chloroplastic.